A 932-amino-acid polypeptide reads, in one-letter code: AP-3 complex subunit delta (932 aa).

T2 is modified (N-acetylthreonine). HEAT repeat units follow at residues 157-194 (SLAR…QYPE), 196-231 (LRDN…KNPQ), 233-269 (FIQL…VEPK), 270-307 (LRAK…LEED), 310-346 (ETAM…KINT), 347-384 (DFIS…EDNL), 386-425 (AIVQ…ENYK), 427-466 (KMVN…DISD), 490-527 (VTIA…TLVE), 528-564 (NGND…NWCN), 570-601 (KRFE…ERSV), and 602-638 (EVLE…AYEL). Phosphoserine is present on residues S700 and S727. Residues 720 to 868 (EREKERMSNP…EEGNLRKEDE (149 aa)) form a disordered region. Composition is skewed to basic and acidic residues over residues 738 to 747 (ERTKNSKDLL) and 755 to 766 (SDKKPETIRLNR). A Phosphothreonine modification is found at T767. The span at 767-779 (TDNSLNSLSLSTT) shows a compositional bias: low complexity. Phosphoserine is present on residues S770 and S773. The span at 783 to 793 (RKKKKGKKKNR) shows a compositional bias: basic residues. Phosphoserine is present on S798. Residues 806 to 832 (APKRKDAFQKPHDNHSTQNPLKKDKIN) show a composition bias toward basic and acidic residues. Over residues 838 to 855 (QLENFDFSNFGQSSNAGR) the composition is skewed to polar residues. Residues 857–868 (SQEEGNLRKEDE) show a composition bias toward basic and acidic residues. Residues 858–878 (QEEGNLRKEDELELSRLEANL) adopt a coiled-coil conformation. S888 carries the phosphoserine modification. Residues 897–915 (KKKKKGKKSKSKNKLKTKA) show a composition bias toward basic residues. Positions 897-932 (KKKKKGKKSKSKNKLKTKAKNSPEPNEFLRDQSTDI) are disordered. The residue at position 918 (S918) is a Phosphoserine. Basic and acidic residues predominate over residues 923–932 (EFLRDQSTDI).

It belongs to the adaptor complexes large subunit family. Adaptor protein complex 3 (AP-3) is a heterotetramer composed of 2 large adaptins (APL5 and APL6), a medium adaptin (APM3) and a small adaptin (APS3). Interacts with VPS41.

It is found in the golgi apparatus. The protein resides in the cytoplasmic vesicle. The protein localises to the clathrin-coated vesicle membrane. Part of the AP-3 complex, an adaptor-related complex which is not clathrin-associated. The complex is associated with the Golgi region as well as more peripheral structures. It facilitates the budding of vesicles from the Golgi membrane and may be directly involved in trafficking to the vacuole. Required for the transport via the ALP pathway, which directs the transport of the cargo proteins PHO8 and VAM3 to the vacuole. This chain is AP-3 complex subunit delta (APL5), found in Saccharomyces cerevisiae (strain ATCC 204508 / S288c) (Baker's yeast).